We begin with the raw amino-acid sequence, 380 residues long: QRFP-like peptide receptor (380 aa).

The Extracellular segment spans residues 1–51 (MMLGNMTFTQTILHELLRQHNMTKNEFIERFGLPPLVYVPELSPGAKTVTL). N-linked (GlcNAc...) asparagine glycans are attached at residues Asn-5 and Asn-21. A helical membrane pass occupies residues 52-72 (VFYVIIFLAALLGNTLVVVVV). The Cytoplasmic segment spans residues 73-83 (WKNKVMRTTMN). Residues 84 to 104 (IFICSLAASDLLITIVCIPVT) form a helical membrane-spanning segment. Over 105–122 (LMQNMLQNWIMGDFMCKL) the chain is Extracellular. A disulfide bridge connects residues Cys-120 and Cys-203. The helical transmembrane segment at 123 to 143 (VPFIQTIAVASSILTLTGIAI) threads the bilayer. The Cytoplasmic portion of the chain corresponds to 144–164 (ERYYAIIHPLKVKYLLSKTRA). A helical membrane pass occupies residues 165–185 (GIILALVWVVSVGVATPMLFV). Over 186-216 (HKAEEIHDFLYEQRFVTCQEKWWGQTQQTSY) the chain is Extracellular. Residues 217–237 (TIFNLVVLFIIPLLTMTSLYI) form a helical membrane-spanning segment. Residues 238–269 (RIAHRLWVQQPVGVTGNFAHGNSVRRKRQAVK) lie on the Cytoplasmic side of the membrane. Residues 270–290 (MLVVVVLLFAVCWLPYHTVTV) traverse the membrane as a helical segment. Over 291 to 305 (MNELTGLRLEEKSAK) the chain is Extracellular. Residues 306–326 (LLIAIVQLIAFSNSFNNPVVY) traverse the membrane as a helical segment. The Cytoplasmic segment spans residues 327–380 (AILNENFKKNFMTMLRCRVNRVSPQQVTPNTLQTPLEQSTRSCRLPAGAPNQQI).

It belongs to the G-protein coupled receptor 1 family.

It is found in the cell membrane. In terms of biological role, receptor for QRFP-like peptide. The activity of this receptor is mediated by G proteins which activate a phosphatidyl-inositol-calcium second messenger system. The polypeptide is QRFP-like peptide receptor (Branchiostoma floridae (Florida lancelet)).